Consider the following 509-residue polypeptide: uncharacterized protein (509 aa).

13 helical membrane passes run 14–34 (SAFT…WVIP), 117–137 (TIEA…IGVI), 158–178 (EFFI…TCGI), 188–208 (ILVP…GAIF), 209–229 (LAAS…VIAS), 240–260 (IGFR…YLYW), 303–323 (LILT…MVGG), 324–344 (WWFP…MFIS), 359–379 (ASEL…NLVL), 399–419 (MPGS…GLIV), 423–443 (SGLA…VGIP), 458–478 (MLFL…QIPF), and 484–504 (FVMP…VVQV).

This sequence to E.coli YfcC. The protein to B.subtilis YcgA.

It is found in the cell membrane. This is an uncharacterized protein from Haemophilus influenzae (strain ATCC 51907 / DSM 11121 / KW20 / Rd).